The sequence spans 105 residues: Thioredoxin (105 aa).

The 104-residue stretch at 2-105 (VKSVGNLADF…KLEETIKSLV (104 aa)) folds into the Thioredoxin domain. Active-site nucleophile residues include Cys-32 and Cys-35. Residues Cys-32 and Cys-35 are joined by a disulfide bond. An S-nitrosocysteine mark is found at Cys-69 and Cys-73.

This sequence belongs to the thioredoxin family. Post-translationally, may be nitrosylated on several cysteine residues, depending on the oxidation state. Nitrosylated Cys-73 may serve as donor for nitrosylation of target proteins.

The protein resides in the nucleus. Its subcellular location is the cytoplasm. It is found in the secreted. Participates in various redox reactions through the reversible oxidation of its active center dithiol to a disulfide and catalyzes dithiol-disulfide exchange reactions. Plays a role in the reversible S-nitrosylation of cysteine residues in target proteins, and thereby contributes to the response to intracellular nitric oxide. Nitrosylates the active site Cys of CASP3 in response to nitric oxide (NO), and thereby inhibits caspase-3 activity. Induces the FOS/JUN AP-1 DNA binding activity in ionizing radiation (IR) cells through its oxidation/reduction status and stimulates AP-1 transcriptional activity. The protein is Thioredoxin (TXN) of Gallus gallus (Chicken).